The chain runs to 381 residues: MSKTFARSSLCALSMTIMTAHAAEPPTNLDKPEGRLDIIAWPGYIERGQTDKQYDWVTQFEKETGCAVNVKTAATSDEMVSLMTKGGYDLVTASGDASLRLIMGKRVQPINTALIPNWKTLDPRVVKGDWFNVGGKVYGTPYQWGPNLLMYNTKTFPTPPDSWQVVFVEQNLPDGKSNKGRVQAYDGPIYIADAALFVKATQPQLGISDPYQLTEEQYQAVLKVLRAQHSLIHRYWHDTTVQMSDFKNEGVVASSAWPYQANALKAEGQPVATVFPKEGVTGWADTTMLHSEAKHPVCAYKWMNWSLTPKVQGDVAAWFGSLPVVPEGCKASPLLGEKGCETNGFNYFDKIAFWKTPIAEGGKFVPYSRWTQDYIAIMGGR.

The first 22 residues, 1–22, serve as a signal peptide directing secretion; that stretch reads MSKTFARSSLCALSMTIMTAHA.

It belongs to the bacterial solute-binding protein PotD/PotF family.

Its subcellular location is the periplasm. It catalyses the reaction (3R)-3-hydroxybutanoyl-CoA + [(3R)-hydroxybutanoate](n) = [(3R)-hydroxybutanoate](n+1) + CoA. In terms of biological role, catalyzes the formation of short polymers of R-3-hydroxybutyrate (cPHB). Involved in natural transformation. Probably part of the ABC transporter complex YdcSTUV. During natural transformation, may bind dsDNA and convey it to the inner membrane channel formed by YdcV. This Escherichia coli (strain K12) protein is Bifunctional polyhydroxybutyrate synthase / ABC transporter periplasmic binding protein (ydcS).